Reading from the N-terminus, the 174-residue chain is MLDREGYRPNVGIILINERNEVFWGKRVREHSWQFPQGGIKPGESPETAMYRELYEEVGLLPQHVKIIGRTRDWLRYDVPNNWVRREWRGSYRGQKQIWYLLRLTGRDCDVNLRATRHPEFDGWRWHQYWAPVDEVIDFKRDVYLGALKELSSRFLRGMESYEDFAARQSSDNR.

Positions 6–149 (GYRPNVGIIL…KRDVYLGALK (144 aa)) constitute a Nudix hydrolase domain. Positions 38 to 59 (GGIKPGESPETAMYRELYEEVG) match the Nudix box motif.

The protein belongs to the Nudix hydrolase family. RppH subfamily. The cofactor is a divalent metal cation.

In terms of biological role, accelerates the degradation of transcripts by removing pyrophosphate from the 5'-end of triphosphorylated RNA, leading to a more labile monophosphorylated state that can stimulate subsequent ribonuclease cleavage. The protein is RNA pyrophosphohydrolase of Neisseria meningitidis serogroup A / serotype 4A (strain DSM 15465 / Z2491).